We begin with the raw amino-acid sequence, 286 residues long: Citrullinase (286 aa).

Residues 4–258 enclose the CN hydrolase domain; the sequence is IKVAVVQLSF…DDILYATFDF (255 aa). The active-site Proton acceptor is Glu-43. Lys-116 is an active-site residue. Cys-153 (nucleophile) is an active-site residue.

This sequence belongs to the carbon-nitrogen hydrolase superfamily.

The enzyme catalyses L-citrulline + H2O + 2 H(+) = L-ornithine + NH4(+) + CO2. Catalyzes the degradation of citrulline into ornithine, carbon dioxide and ammonia. Contributes to intramacrophage survival, in vivo growth and pathogenesis. This is Citrullinase from Francisella tularensis subsp. tularensis (strain SCHU S4 / Schu 4).